The chain runs to 318 residues: Pheromone-regulated membrane protein 5 (318 aa).

The helical transmembrane segment at 75–98 (GTVFIVVGGIAGVIFLAILLWWVI) threads the bilayer. Serine 129 bears the Phosphoserine mark. Low complexity predominate over residues 238 to 247 (TISSSSASSL). The disordered stretch occupies residues 238–318 (TISSSSASSL…HMLEGKEQDE (81 aa)). Residues 250–261 (GNEKEVGEDIRK) show a composition bias toward basic and acidic residues. Over residues 276–285 (SPESDGSVNR) the composition is skewed to polar residues. Phosphoserine is present on residues serine 279, serine 282, and serine 288. The segment covering 309–318 (HMLEGKEQDE) has biased composition (basic and acidic residues). Residue lysine 314 forms a Glycyl lysine isopeptide (Lys-Gly) (interchain with G-Cter in ubiquitin) linkage.

This sequence belongs to the PRM5 family.

It is found in the membrane. This is Pheromone-regulated membrane protein 5 (PRM5) from Saccharomyces cerevisiae (strain ATCC 204508 / S288c) (Baker's yeast).